The chain runs to 446 residues: Exodeoxyribonuclease 7 large subunit (446 aa).

It belongs to the XseA family. In terms of assembly, heterooligomer composed of large and small subunits.

It is found in the cytoplasm. It catalyses the reaction Exonucleolytic cleavage in either 5'- to 3'- or 3'- to 5'-direction to yield nucleoside 5'-phosphates.. In terms of biological role, bidirectionally degrades single-stranded DNA into large acid-insoluble oligonucleotides, which are then degraded further into small acid-soluble oligonucleotides. The sequence is that of Exodeoxyribonuclease 7 large subunit from Streptococcus pneumoniae (strain Taiwan19F-14).